Consider the following 335-residue polypeptide: S-adenosylmethionine decarboxylase proenzyme (335 aa).

Active-site residues include E12 and E15. Catalysis depends on S70, which acts as the Schiff-base intermediate with substrate; via pyruvic acid. Pyruvic acid (Ser); by autocatalysis is present on S70. C84 acts as the Proton donor; for catalytic activity in catalysis. Residues S231 and H245 each act as proton acceptor; for processing activity in the active site.

This sequence belongs to the eukaryotic AdoMetDC family. Pyruvate is required as a cofactor. Is synthesized initially as an inactive proenzyme. Formation of the active enzyme involves a self-maturation process in which the active site pyruvoyl group is generated from an internal serine residue via an autocatalytic post-translational modification. Two non-identical subunits are generated from the proenzyme in this reaction, and the pyruvate is formed at the N-terminus of the alpha chain, which is derived from the carboxyl end of the proenzyme. The post-translation cleavage follows an unusual pathway, termed non-hydrolytic serinolysis, in which the side chain hydroxyl group of the serine supplies its oxygen atom to form the C-terminus of the beta chain, while the remainder of the serine residue undergoes an oxidative deamination to produce ammonia and the pyruvoyl group blocking the N-terminus of the alpha chain.

The catalysed reaction is S-adenosyl-L-methionine + H(+) = S-adenosyl 3-(methylsulfanyl)propylamine + CO2. It participates in amine and polyamine biosynthesis; S-adenosylmethioninamine biosynthesis; S-adenosylmethioninamine from S-adenosyl-L-methionine: step 1/1. Functionally, essential for biosynthesis of the polyamines spermidine and spermine. Promotes maintenance and self-renewal of embryonic stem cells, by maintaining spermine levels. In Xenopus laevis (African clawed frog), this protein is S-adenosylmethionine decarboxylase proenzyme (amd1).